The chain runs to 428 residues: Cholecystokinin receptor type A (428 aa).

Over 1–41 (MDVVDSLLVNGSNITPPCELGLENETLFCLDQPRPSKEWQP) the chain is Extracellular. Residues asparagine 10 and asparagine 24 are each glycosylated (N-linked (GlcNAc...) asparagine). A disulfide bond links cysteine 18 and cysteine 29. The helical transmembrane segment at 42–67 (AVQILLYSLIFLLSVLGNTLVITVLI) threads the bilayer. Over 68–77 (RNKRMRTVTN) the chain is Cytoplasmic. Residues 78–104 (IFLLSLAVSDLMLCLFCMPFNLIPNLL) form a helical membrane-spanning segment. The Extracellular portion of the chain corresponds to 105–115 (KDFIFGSAVCK). Cysteines 114 and 196 form a disulfide. The chain crosses the membrane as a helical span at residues 116 to 137 (TTTYFMGTSVSVSTFNLVAISL). Over 138–157 (ERYGAICKPLQSRVWQTKSH) the chain is Cytoplasmic. The helical transmembrane segment at 158-178 (ALKVIAATWCLSFTIMTPYPI) threads the bilayer. Residues 179–210 (YSNLVPFTKNNNQTANMCRFLLPNDVMQQSWH) are Extracellular-facing. Residue asparagine 190 is glycosylated (N-linked (GlcNAc...) asparagine). Residues 211–234 (TFLLLILFLIPGIVMMVAYGLISL) form a helical membrane-spanning segment. The Cytoplasmic portion of the chain corresponds to 235–313 (ELYQGIKFEA…NLMAKKRVIR (79 aa)). Residues 248 to 272 (KSAKERKPSTTSSGKYEDSDGCYLQ) are disordered. Residues 314–334 (MLIVIVVLFFLCWMPIFSANA) traverse the membrane as a helical segment. The Extracellular segment spans residues 335-349 (WRAYDTASAERRLSG). Residues 350 to 373 (TPISFILLLSYTSSCVNPIIYCFM) form a helical membrane-spanning segment. At 374 to 428 (NKRFRLGFMATFPCCPNPGPPGARGEVGEEEEGGTTGASLSRFSYSHMSASVPPQ) the chain is on the cytoplasmic side. A lipid anchor (S-palmitoyl cysteine) is attached at cysteine 387. The interval 394–428 (PGARGEVGEEEEGGTTGASLSRFSYSHMSASVPPQ) is disordered. Positions 411-422 (ASLSRFSYSHMS) are enriched in polar residues.

The protein belongs to the G-protein coupled receptor 1 family.

It is found in the cell membrane. In terms of biological role, receptor for cholecystokinin. Mediates pancreatic growth and enzyme secretion, smooth muscle contraction of the gall bladder and stomach. Has a 1000-fold higher affinity for CCK rather than for gastrin. It modulates feeding and dopamine-induced behavior in the central and peripheral nervous system. This receptor mediates its action by association with G proteins that activate a phosphatidylinositol-calcium second messenger system. This is Cholecystokinin receptor type A (CCKAR) from Homo sapiens (Human).